The chain runs to 49 residues: L-amino-acid oxidase (49 aa).

43 to 44 contributes to the FAD binding site; sequence MS.

Belongs to the flavin monoamine oxidase family. FIG1 subfamily. As to quaternary structure, homodimer; non-covalently linked. FAD is required as a cofactor. N-glycosylated. In terms of tissue distribution, expressed by the venom gland.

The protein localises to the secreted. The enzyme catalyses an L-alpha-amino acid + O2 + H2O = a 2-oxocarboxylate + H2O2 + NH4(+). It carries out the reaction L-leucine + O2 + H2O = 4-methyl-2-oxopentanoate + H2O2 + NH4(+). Functionally, catalyzes an oxidative deamination of predominantly hydrophobic and aromatic L-amino acids, thus producing hydrogen peroxide that may contribute to the diverse toxic effects of this enzyme. Shows activity on L-Leu. Exhibits diverse biological activities, such as hemorrhage, hemolysis, edema, antibacterial and antiparasitic activities, as well as regulation of platelet aggregation. Its effect on platelets is controversial, since it either induces aggregation or inhibits agonist-induced aggregation. These different effects are probably due to different experimental conditions. In addition, this protein induces apoptosis and necrosis and has inhibitory effects on rat kidney function (decrease of blood flow and glomerular filtration). This Bothrops insularis (Golden lancehead) protein is L-amino-acid oxidase.